The sequence spans 697 residues: Methionine--tRNA ligase (697 aa).

A 'HIGH' region motif is present at residues 11 to 21 (PYANGPIHLGH). Zn(2+)-binding residues include C142, C145, C155, and C158. A 'KMSKS' region motif is present at residues 343–347 (KMSKS). K346 lines the ATP pocket. Residues 595–697 (DFMKVEMTVA…DECKVGDKLA (103 aa)) form the tRNA-binding domain.

Belongs to the class-I aminoacyl-tRNA synthetase family. MetG type 1 subfamily. In terms of assembly, homodimer. Zn(2+) serves as cofactor.

Its subcellular location is the cytoplasm. It carries out the reaction tRNA(Met) + L-methionine + ATP = L-methionyl-tRNA(Met) + AMP + diphosphate. In terms of biological role, is required not only for elongation of protein synthesis but also for the initiation of all mRNA translation through initiator tRNA(fMet) aminoacylation. This Psychrobacter sp. (strain PRwf-1) protein is Methionine--tRNA ligase.